Here is a 312-residue protein sequence, read N- to C-terminus: MAIYLDFENHIKEIQNEIELALIRGDEDAKEILEKRLDKEVKSIYSNLTDFQKLQLARHPDRPYAMDYIDLILKDKYEVFGDRHYNDDKAIVCFIGKIDNVPVVVIGEEKGRGTKNKLLRNFGMPNPCGYRKALKMAKFAEKFNLPILMLVDTAGAYPGIGAEERGQSEAIAKNLQEFASLKVPTISIIIGEGGSGGALAIAVADKLAMMEYSIFSVISPEGCAAILWDDPSKTEVAIKAMKITPRDLKEAGLIDDIILEPSKGAHRDKFSAANTIKEYFLDALRTIQQDPHFLDNRYQKLMSLGSFVESMN.

Positions 36 to 286 constitute a CoA carboxyltransferase C-terminal domain; that stretch reads RLDKEVKSIY…KEYFLDALRT (251 aa).

It belongs to the AccA family. As to quaternary structure, acetyl-CoA carboxylase is a heterohexamer composed of biotin carboxyl carrier protein (AccB), biotin carboxylase (AccC) and two subunits each of ACCase subunit alpha (AccA) and ACCase subunit beta (AccD).

It is found in the cytoplasm. The catalysed reaction is N(6)-carboxybiotinyl-L-lysyl-[protein] + acetyl-CoA = N(6)-biotinyl-L-lysyl-[protein] + malonyl-CoA. The protein operates within lipid metabolism; malonyl-CoA biosynthesis; malonyl-CoA from acetyl-CoA: step 1/1. Functionally, component of the acetyl coenzyme A carboxylase (ACC) complex. First, biotin carboxylase catalyzes the carboxylation of biotin on its carrier protein (BCCP) and then the CO(2) group is transferred by the carboxyltransferase to acetyl-CoA to form malonyl-CoA. This chain is Acetyl-coenzyme A carboxylase carboxyl transferase subunit alpha, found in Helicobacter pylori (strain J99 / ATCC 700824) (Campylobacter pylori J99).